Reading from the N-terminus, the 365-residue chain is Leu/Ile/Val/Thr-binding protein (365 aa).

The signal sequence occupies residues 1 to 21 (MKGKTLLAGCIALSLSHMAFA). Cysteine 74 and cysteine 99 are oxidised to a cystine.

The protein belongs to the leucine-binding protein family.

It is found in the periplasm. In terms of biological role, this protein is a component of the leucine, isoleucine, valine, threonine transport system, which is one of the two periplasmic binding protein-dependent transport systems of the high-affinity transport of the branched-chain amino acids. This is Leu/Ile/Val/Thr-binding protein (livJ) from Salmonella typhimurium (strain LT2 / SGSC1412 / ATCC 700720).